The following is a 216-amino-acid chain: 3-isopropylmalate dehydratase small subunit (216 aa).

This sequence belongs to the LeuD family. LeuD type 1 subfamily. In terms of assembly, heterodimer of LeuC and LeuD.

It catalyses the reaction (2R,3S)-3-isopropylmalate = (2S)-2-isopropylmalate. It functions in the pathway amino-acid biosynthesis; L-leucine biosynthesis; L-leucine from 3-methyl-2-oxobutanoate: step 2/4. Its function is as follows. Catalyzes the isomerization between 2-isopropylmalate and 3-isopropylmalate, via the formation of 2-isopropylmaleate. The chain is 3-isopropylmalate dehydratase small subunit from Methylibium petroleiphilum (strain ATCC BAA-1232 / LMG 22953 / PM1).